Reading from the N-terminus, the 238-residue chain is Sugar fermentation stimulation protein homolog (238 aa).

The protein belongs to the SfsA family.

This is Sugar fermentation stimulation protein homolog from Histophilus somni (strain 129Pt) (Haemophilus somnus).